We begin with the raw amino-acid sequence, 354 residues long: Uroporphyrinogen decarboxylase (354 aa).

Substrate is bound by residues 28–32 (RQAGR), Asp-78, Tyr-155, Ser-210, and His-325.

The protein belongs to the uroporphyrinogen decarboxylase family. Homodimer.

It localises to the cytoplasm. It catalyses the reaction uroporphyrinogen III + 4 H(+) = coproporphyrinogen III + 4 CO2. It participates in porphyrin-containing compound metabolism; protoporphyrin-IX biosynthesis; coproporphyrinogen-III from 5-aminolevulinate: step 4/4. Functionally, catalyzes the decarboxylation of four acetate groups of uroporphyrinogen-III to yield coproporphyrinogen-III. This chain is Uroporphyrinogen decarboxylase, found in Trichodesmium erythraeum (strain IMS101).